Consider the following 410-residue polypeptide: Indoleamine 2,3-dioxygenase nanC (410 aa).

His309 is a binding site for heme.

The protein belongs to the indoleamine 2,3-dioxygenase family. The cofactor is heme.

The catalysed reaction is D-tryptophan + O2 = N-formyl-D-kynurenine. The enzyme catalyses L-tryptophan + O2 = N-formyl-L-kynurenine. The protein operates within secondary metabolite biosynthesis. Indoleamine 2,3-dioxygenase; part of the gene cluster that mediates the biosynthesis of the benzazepine alkaloid nanangelenin A which contains an unprecedented 3,4-dihydro-1-benzazepine-2,5-dione-N-prenyl-N-acetoxy-anthranilamide scaffold. The first step of nanangelenin biosynthesis is catalyzed by the indoleamine 2,3-dioxygenase nanC which produces N-formyl-kynurenine through the catabolism of tryptophan. The two-module NRPS nanA then utilizes anthranilate (Ant) and L-kynurenine (L-Kyn) to assemble the dipeptide product nanangelenin B. The first adenylation domain of nanA (A1) loads anthranilate onto the T1 domain, while A2 loads kynurenine, generated through spontaneous nonenzymatic deformylation of the nanC-supplied N-formyl-kynurenine. The peptide bond formation between the tethered amino acids is catalyzed by the first condensation domain (C1) between anthranilate's carbonyl carbon and kynurenine's aliphatic primary amine. The second C domain (C2) catalyzes the final cyclization event between the aromatic amine of kynurenine and the tethered carbonyl carbon, yielding nanangelenin B. The terminal T3 domain enhances the catalytic efficiency of C2, suggesting the T2-tethered Ant-L-Kyn is transferred to T3 prior to cyclization by C2. Once released from nanA, nanangelenin B is then prenylated by the prenyltransferase nanD to form nanangelenin C. Nanangelenin C is then N-hydroxylated by the FAD-dependent monooxygenase nanF and further acetylated by the acetyltransferase nanB to yield nanangelenin F. Finally, the N-methyltransferase nanE methylates the amide nitrogen of 1-benzazepine to convert nanangelenin F into nanangelenin A. NanE is also able to methylate most of the intermediates of the pathway such as nanangelenin B and nanangelenin C to produce nanangelenin D and nanangelenin E, respectively. This Aspergillus nanangensis protein is Indoleamine 2,3-dioxygenase nanC.